A 158-amino-acid chain; its full sequence is U-limacoditoxin(8)-Dv66 (158 aa).

Residues 1-24 form the signal peptide; that stretch reads MALRAPWIALCCVLAVLFVVPAAT. The propeptide occupies 25–32; that stretch reads RDEERQKR. Repeat copies occupy residues 33–78 and 79–124. The 3 X 46 AA tandem repeats stretch occupies residues 33–158; the sequence is GVDFGLQRGF…AQDPHGPGRK (126 aa). At P63 the chain carries Proline amide. A propeptide spanning residues 64-78 is cleaved from the precursor; it reads GRKRRDAYEMERQKR. Residues 101–120 form a disordered region; the sequence is ARAQDPHGPGRKRRDAYEME. A Proline amide modification is found at P109. Residues 110–124 constitute a propeptide that is removed on maturation; that stretch reads GRKRRDAYEMERQKR. A 3; half-length repeat occupies 125–158; it reads GVDFGLQRGFSGSELAKLKLALARAQDPHGPGRK. A Proline amide modification is found at P155.

Belongs to the diuretic hormone class 2 family. Expressed by the venom secretory cell of the spine. The spine is a cuticular structure containing a single large nucleated venom-secreting cell at its base. It is an independent unit capable of producing, storing and injecting venom. On the back of D.vulnerans caterpillars, spines are grouped together by 50 to 100 to form scoli, of which there are eight in D.vulnerans.

The protein resides in the secreted. Probable toxin. Does not show insecticidal, antimicrobial and antiparasitic activities. Does not induce increase in intracellular calcium in mouse DRG neurons, suggesting that it does not induce pain. This is U-limacoditoxin(8)-Dv66 from Doratifera vulnerans (Mottled cup moth).